Consider the following 1103-residue polypeptide: PALM2-AKAP2 fusion protein (1103 aa).

2 disordered regions span residues 178-197 and 304-396; these read ESAS…KKPP and YNGT…SSRD. Positions 179–189 are enriched in polar residues; the sequence is SASNATETSGP. Phosphoserine is present on residues serine 322, serine 352, and serine 383. Positions 380–392 are enriched in low complexity; that stretch reads VPVSPSSTTSSRC. Lysine 405 participates in a covalent cross-link: Glycyl lysine isopeptide (Lys-Gly) (interchain with G-Cter in SUMO1); alternate. Residue lysine 405 forms a Glycyl lysine isopeptide (Lys-Gly) (interchain with G-Cter in SUMO2); alternate linkage. A coiled-coil region spans residues 444-521; it reads EEMLELEKER…QKQLQQQQQQ (78 aa). Disordered regions lie at residues 483–544 and 566–662; these read EQLD…DKAK and NSRQ…SKLW. Residues 490–505 are compositionally biased toward basic and acidic residues; that stretch reads LESHKKYKERKERRAQ. Over residues 506–521 the composition is skewed to low complexity; the sequence is QEQLLLQKQLQQQQQQ. Over residues 522–531 the composition is skewed to polar residues; the sequence is PPSQLCTAPA. Basic and acidic residues predominate over residues 533–544; that stretch reads SHERASMIDKAK. Positions 566–579 are enriched in polar residues; the sequence is NSRQAVAKGQSTPR. A phosphoserine mark is found at serine 567 and serine 624. Positions 633-643 are enriched in polar residues; that stretch reads AAGSQGNTASQ. Phosphoserine is present on residues serine 692, serine 696, and serine 748. Polar residues predominate over residues 745–763; the sequence is QENSLADFSLPQTPQTDNP. The disordered stretch occupies residues 745 to 794; the sequence is QENSLADFSLPQTPQTDNPSEGRGEGVSKSFSDHGFYSPSSTLGDSPLVD. Threonine 757 carries the phosphothreonine modification. The segment at 797–810 is PKA-RII subunit binding domain; that stretch reads LEYQAGLLVQNAIQ. Residues 817-829 show a composition bias toward basic and acidic residues; that stretch reads VDKAVSKTSRDGA. The segment at 817 to 907 is disordered; the sequence is VDKAVSKTSR…GPINMEETRP (91 aa). At serine 862 the chain carries Phosphoserine. The span at 865–886 shows a compositional bias: basic and acidic residues; sequence QEKRDVLPKILPAEDRALRERG. Positions 941–979 form a coiled coil; that stretch reads KLRSRKQRTLSMIEEEIRAAQEREEELKRQRQVLQSTQS. Serine 951, serine 979, serine 1009, and serine 1016 each carry phosphoserine. Residues 962-1035 form a disordered region; that stretch reads EREEELKRQR…AAGTQRPKNL (74 aa). The segment covering 976–990 has biased composition (polar residues); sequence STQSPRTKNAPSLPS.

In terms of tissue distribution, expressed in infantile heart and muscle, and fibroblasts.

It is found in the apical cell membrane. Functionally, binds to regulatory subunit (RII) of protein kinase A. May be involved in establishing polarity in signaling systems or in integrating PKA-RII isoforms with downstream effectors to capture, amplify and focus diffuse, trans-cellular signals carried by cAMP. Binds to and modulates the structure of the actin cytoskeleton. The sequence is that of PALM2-AKAP2 fusion protein from Homo sapiens (Human).